We begin with the raw amino-acid sequence, 211 residues long: MSEGGSKDSSGSECPVCYEKFRDLDGASRTLSCGHVFCHDCLVKYLLSTRVDGQVQRTIVCPICRYVTFLSKKSSRWPSMLDKSSQTLTVPVGLPSTPSPDRGGHTNPLVISHQVWRQSSSQGSQVPLDLLPSLPRESQIFIISRHGMPLGEQDSVLPRRSLAEISEASPAPSATRSFCCRSRALLLITLIAVVAVVAAILPWVLLVRKQA.

The RING-type zinc finger occupies 14-65 (CPVCYEKFRDLDGASRTLSCGHVFCHDCLVKYLLSTRVDGQVQRTIVCPICR). Residues 187–207 (LITLIAVVAVVAAILPWVLLV) form a helical membrane-spanning segment.

It localises to the membrane. This chain is RING finger protein 222 (Rnf222), found in Mus musculus (Mouse).